Here is a 944-residue protein sequence, read N- to C-terminus: Leucine--tRNA ligase (944 aa).

The short motif at 40-51 is the 'HIGH' region element; that stretch reads PYPSGAGLHVGH. Positions 718 to 722 match the 'KMSKS' region motif; the sequence is KMSKS. Lys-721 lines the ATP pocket.

The protein belongs to the class-I aminoacyl-tRNA synthetase family.

It is found in the cytoplasm. The catalysed reaction is tRNA(Leu) + L-leucine + ATP = L-leucyl-tRNA(Leu) + AMP + diphosphate. The polypeptide is Leucine--tRNA ligase (Bacteroides thetaiotaomicron (strain ATCC 29148 / DSM 2079 / JCM 5827 / CCUG 10774 / NCTC 10582 / VPI-5482 / E50)).